The sequence spans 395 residues: Phosphoglycerate kinase (395 aa).

Substrate contacts are provided by residues 21–23 (DLN), Arg-36, 59–62 (HLGR), Arg-113, and Arg-146. Residues Lys-197, Glu-324, and 350–353 (GGDT) contribute to the ATP site.

It belongs to the phosphoglycerate kinase family. Monomer.

Its subcellular location is the cytoplasm. The catalysed reaction is (2R)-3-phosphoglycerate + ATP = (2R)-3-phospho-glyceroyl phosphate + ADP. Its pathway is carbohydrate degradation; glycolysis; pyruvate from D-glyceraldehyde 3-phosphate: step 2/5. The protein is Phosphoglycerate kinase of Acinetobacter baumannii (strain AB307-0294).